The primary structure comprises 544 residues: Chaperonin GroEL (544 aa).

ATP-binding positions include 29–32 (TLGP), lysine 50, 86–90 (DGTTT), glycine 414, 477–479 (DAA), and aspartate 493.

Belongs to the chaperonin (HSP60) family. Forms a cylinder of 14 subunits composed of two heptameric rings stacked back-to-back. Interacts with the co-chaperonin GroES.

Its subcellular location is the cytoplasm. It catalyses the reaction ATP + H2O + a folded polypeptide = ADP + phosphate + an unfolded polypeptide.. Together with its co-chaperonin GroES, plays an essential role in assisting protein folding. The GroEL-GroES system forms a nano-cage that allows encapsulation of the non-native substrate proteins and provides a physical environment optimized to promote and accelerate protein folding. The protein is Chaperonin GroEL of Hydrogenovibrio crunogenus (strain DSM 25203 / XCL-2) (Thiomicrospira crunogena).